We begin with the raw amino-acid sequence, 126 residues long: Small ribosomal subunit protein uS8 (126 aa).

It belongs to the universal ribosomal protein uS8 family. Part of the 30S ribosomal subunit. Contacts proteins S5 and S12.

In terms of biological role, one of the primary rRNA binding proteins, it binds directly to 16S rRNA central domain where it helps coordinate assembly of the platform of the 30S subunit. The chain is Small ribosomal subunit protein uS8 from Nitratidesulfovibrio vulgaris (strain DSM 19637 / Miyazaki F) (Desulfovibrio vulgaris).